The following is a 280-amino-acid chain: Alpha-methyl-mannoside-specific lectin (280 aa).

Positions 1 to 26 (MAISKKILPLLSIATIFLLLLNKAHS) are cleaved as a signal peptide. Residues aspartate 114 and glycine 134 each contribute to the a carbohydrate site. The Mn(2+) site is built by glutamate 156 and aspartate 158. Ca(2+) contacts are provided by aspartate 158 and phenylalanine 160. A carbohydrate-binding residues include serine 165 and asparagine 166. Residues asparagine 166 and aspartate 169 each coordinate Ca(2+). Mn(2+) contacts are provided by aspartate 169 and histidine 174. The a carbohydrate site is built by glycine 248 and glutamine 250.

This sequence belongs to the leguminous lectin family. As to quaternary structure, homodimer. Post-translationally, glycosylated.

Alpha-methyl-D-mannoside-specific lectin. Has hemagglutinating activity towards rabbit erythrocytes. Binds to cytokinins and significantly inhibits physiological effects of cytokinin activity such as cotyledon expansion and delayed leaf senescence. In Arachis hypogaea (Peanut), this protein is Alpha-methyl-mannoside-specific lectin.